The primary structure comprises 355 residues: Protein-tyrosine sulfotransferase 1 (355 aa).

The Cytoplasmic portion of the chain corresponds to 1 to 8 (MIGKLKQN). The chain crosses the membrane as a helical; Signal-anchor for type II membrane protein span at residues 9-25 (LLVACLVISSVTVFYLC). The Lumenal portion of the chain corresponds to 26 to 355 (RHAMDCHHRI…QKSPEKPNPS (330 aa)). Asn-55 carries N-linked (GlcNAc...) asparagine glycosylation. 76-80 (RSGTT) contacts 3'-phosphoadenylyl sulfate. A disulfide bond links Cys-94 and Cys-154. Glu-97 acts as the Proton donor/acceptor in catalysis. The segment at 99 to 103 (RVIPR) is interaction with peptide substrate. Positions 181, 189, and 193 each coordinate 3'-phosphoadenylyl sulfate. A disulfide bridge links Cys-223 with Cys-230. Residues Tyr-235, 282–291 (STDQVIKPVN), and Lys-297 contribute to the 3'-phosphoadenylyl sulfate site. A disordered region spans residues 325–355 (HANPPNYGRPDPLVLDNTRRLQKSPEKPNPS). Basic and acidic residues predominate over residues 341–355 (NTRRLQKSPEKPNPS).

The protein belongs to the protein sulfotransferase family.

The protein resides in the golgi apparatus membrane. The enzyme catalyses L-tyrosyl-[protein] + 3'-phosphoadenylyl sulfate = O-sulfo-L-tyrosine-[protein] + adenosine 3',5'-bisphosphate + H(+). In terms of biological role, catalyzes the O-sulfation of tyrosine residues within acidic motifs of polypeptides, using 3'-phosphoadenylyl sulfate (PAPS) as cosubstrate. The protein is Protein-tyrosine sulfotransferase 1 (tpst1) of Danio rerio (Zebrafish).